The primary structure comprises 245 residues: tRNA pseudouridine synthase A 2 (245 aa).

Aspartate 53 functions as the Nucleophile in the catalytic mechanism. Tyrosine 111 is a substrate binding site.

It belongs to the tRNA pseudouridine synthase TruA family. Homodimer.

The catalysed reaction is uridine(38/39/40) in tRNA = pseudouridine(38/39/40) in tRNA. Functionally, formation of pseudouridine at positions 38, 39 and 40 in the anticodon stem and loop of transfer RNAs. This is tRNA pseudouridine synthase A 2 from Bacillus anthracis.